A 314-amino-acid chain; its full sequence is uncharacterized protein (314 aa).

The next 2 membrane-spanning stretches (helical) occupy residues 23 to 43 (LALGPVHPGGPTLIDLLMALF) and 98 to 118 (MASGIGGALSGALGGVMGPLT). Residues 165–184 (GLGSGAGGGDVGGGGAGGTT) are compositionally biased toward gly residues. Residues 165–314 (GLGSGAGGGD…APDEKTDAGE (150 aa)) are disordered. The span at 190 to 202 (GPPPVPTSSPPTT) shows a compositional bias: pro residues. Composition is skewed to low complexity over residues 203–212 (PAGAPTKSAT) and 219–232 (ASPASAHMGAAGMP). A helical transmembrane segment spans residues 221 to 241 (PASAHMGAAGMPMVPPGAMGA). A compositionally biased stretch (basic and acidic residues) spans 294–314 (LLPEHKDFGRIAPDEKTDAGE).

It is found in the cell membrane. This is an uncharacterized protein from Mycobacterium tuberculosis (strain CDC 1551 / Oshkosh).